A 239-amino-acid polypeptide reads, in one-letter code: uncharacterized protein (239 aa).

The segment at 94–114 (CEVSGKEIPFERLEALPTATT) adopts a dksA C4-type; degenerate zinc-finger fold. Over residues 133–158 (ETPFGQFEFDDDEEIRAPYDSEDSYQ) the composition is skewed to acidic residues. Residues 133–182 (ETPFGQFEFDDDEEIRAPYDSEDSYQDVEKYGNSQTPQDMENPPLSYDDM) are disordered.

This is an uncharacterized protein from Bacillus subtilis (strain 168).